We begin with the raw amino-acid sequence, 120 residues long: NAD(P)H-quinone oxidoreductase subunit 3, chloroplastic (120 aa).

3 consecutive transmembrane segments (helical) span residues 2–22 (FLLY…VIPI), 64–84 (MFAL…PWAL), and 88–108 (ILGV…VLGL).

It belongs to the complex I subunit 3 family. NDH is composed of at least 16 different subunits, 5 of which are encoded in the nucleus.

It is found in the plastid. It localises to the chloroplast thylakoid membrane. It catalyses the reaction a plastoquinone + NADH + (n+1) H(+)(in) = a plastoquinol + NAD(+) + n H(+)(out). The catalysed reaction is a plastoquinone + NADPH + (n+1) H(+)(in) = a plastoquinol + NADP(+) + n H(+)(out). Functionally, NDH shuttles electrons from NAD(P)H:plastoquinone, via FMN and iron-sulfur (Fe-S) centers, to quinones in the photosynthetic chain and possibly in a chloroplast respiratory chain. The immediate electron acceptor for the enzyme in this species is believed to be plastoquinone. Couples the redox reaction to proton translocation, and thus conserves the redox energy in a proton gradient. This Oenothera argillicola (Appalachian evening primrose) protein is NAD(P)H-quinone oxidoreductase subunit 3, chloroplastic.